The following is a 354-amino-acid chain: 3'-5' exonuclease (354 aa).

The interval 1-120 is disordered; it reads MEKYLIKMPI…PSPEKEKPEK (120 aa). Basic and acidic residues-rich tracts occupy residues 13–23, 36–50, and 71–91; these read KASEVPKDKAV, TKND…KENA, and KNLD…ENPP. Phosphoserine is present on residues S104, S110, and S112. In terms of domain architecture, 3'-5' exonuclease spans 146 to 314; sequence VLQWVEKQKD…GQVIYRELER (169 aa). Residues D163, E165, and D301 each coordinate Mg(2+).

This sequence belongs to the WRNexo family.

It is found in the nucleus. In terms of biological role, has exonuclease activity on both single-stranded and duplex templates bearing overhangs, but not blunt ended duplex DNA, and cleaves in a 3'-5' direction. Essential for the formation of DNA replication focal centers. Has an important role in maintaining genome stability. The sequence is that of 3'-5' exonuclease from Drosophila erecta (Fruit fly).